Here is a 355-residue protein sequence, read N- to C-terminus: MSFFRGLRRTNKVYNDPSGFITDHAQLIRNQTPAGFNLNNPTTMGLANGTYVPGYNINGAFISNTNVNTVLRNNDVVGMRQLFPDASNNQMNGLTNLRRADNIPDATLHGLQTRKNGVKTSHPETAVRDRVGVENALAQNPRLADYLRGAGYVTLFGVSVYLVINVADLVSSIVEALNRTGGSWYYRGNNGGDNFSNIDACVLRYRSCGMSLADIDEFVCELDPHDPNNVDPLLSFDEARNFCNGYSLAAEGSVCRGSDTNADPSTLQYLDISELEPNQTVQCVEPYDFGDLIGDLGLDWLLGENGFVTASSNSLTSVSNNFTTILLVIGGILLLTFIGFVIFKVVNRSSNNNTS.

A helical membrane pass occupies residues 150–170 (AGYVTLFGVSVYLVINVADLV). The N-linked (GlcNAc...) asparagine; by host glycan is linked to N178. A helical membrane pass occupies residues 322-342 (FTTILLVIGGILLLTFIGFVI).

This sequence belongs to the baculoviridae E56 family.

It localises to the virion membrane. Functionally, structural protein that is specific for occlusion-derived virus (ODV) envelopes but not of budded virus (BV). This chain is Occlusion-derived virus envelope protein E56 (odv-e56), found in Cydia pomonella granulosis virus (isolate Mexico/1963) (CpGV).